The chain runs to 355 residues: Arginine kinase (355 aa).

In terms of domain architecture, Phosphagen kinase N-terminal spans 8 to 90 (KLQAGFKKLE…FDPIIEDYHV (83 aa)). 63–67 (GVGIY) contributes to the L-arginine binding site. In terms of domain architecture, Phosphagen kinase C-terminal spans 118 to 355 (YVISTRVRCG…LQLIKMEKEM (238 aa)). ATP-binding positions include 121-125 (STRVR) and H184. L-arginine is bound at residue E224. Residue R228 coordinates ATP. Position 270 (C270) interacts with L-arginine. ATP contacts are provided by residues 279–283 (RASVH) and 308–313 (RGTRGE). Residue E313 coordinates L-arginine.

Belongs to the ATP:guanido phosphotransferase family. In terms of assembly, monomer.

It catalyses the reaction L-arginine + ATP = N(omega)-phospho-L-arginine + ADP + H(+). This chain is Arginine kinase, found in Penaeus japonicus (Kuruma prawn).